The primary structure comprises 198 residues: Translation machinery-associated protein 22 (198 aa).

The SUI1 domain occupies 99–170 (VIIKREARTK…EVETYIHSLL (72 aa)).

This sequence belongs to the DENR family. Interacts with the 40S ribosomal subunit.

Its subcellular location is the cytoplasm. In Saccharomyces cerevisiae (strain YJM789) (Baker's yeast), this protein is Translation machinery-associated protein 22 (TMA22).